The sequence spans 257 residues: GTP cyclohydrolase FolE2 (257 aa).

It belongs to the GTP cyclohydrolase IV family.

It catalyses the reaction GTP + H2O = 7,8-dihydroneopterin 3'-triphosphate + formate + H(+). Its pathway is cofactor biosynthesis; 7,8-dihydroneopterin triphosphate biosynthesis; 7,8-dihydroneopterin triphosphate from GTP: step 1/1. Its function is as follows. Converts GTP to 7,8-dihydroneopterin triphosphate. The protein is GTP cyclohydrolase FolE2 of Dictyoglomus turgidum (strain DSM 6724 / Z-1310).